The chain runs to 505 residues: Ribose import ATP-binding protein RbsA (505 aa).

ABC transporter domains follow at residues Leu12–Lys249 and Val259–Ser504. Gly44 to Ser51 is a binding site for ATP.

It belongs to the ABC transporter superfamily. Ribose importer (TC 3.A.1.2.1) family. As to quaternary structure, the complex is composed of an ATP-binding protein (RbsA), two transmembrane proteins (RbsC) and a solute-binding protein (RbsB).

The protein resides in the cell membrane. The catalysed reaction is D-ribose(out) + ATP + H2O = D-ribose(in) + ADP + phosphate + H(+). Functionally, part of the ABC transporter complex RbsABC involved in ribose import. Responsible for energy coupling to the transport system. The sequence is that of Ribose import ATP-binding protein RbsA from Clostridium tetani (strain Massachusetts / E88).